We begin with the raw amino-acid sequence, 484 residues long: Protein nucleotidyltransferase YdiU (484 aa).

Residues G87, G89, R90, K110, D122, G123, R173, and R180 each contribute to the ATP site. The Proton acceptor role is filled by D249. 2 residues coordinate Mg(2+): N250 and D259. D259 contacts ATP.

Belongs to the SELO family. Mg(2+) serves as cofactor. The cofactor is Mn(2+).

It catalyses the reaction L-seryl-[protein] + ATP = 3-O-(5'-adenylyl)-L-seryl-[protein] + diphosphate. The enzyme catalyses L-threonyl-[protein] + ATP = 3-O-(5'-adenylyl)-L-threonyl-[protein] + diphosphate. It carries out the reaction L-tyrosyl-[protein] + ATP = O-(5'-adenylyl)-L-tyrosyl-[protein] + diphosphate. The catalysed reaction is L-histidyl-[protein] + UTP = N(tele)-(5'-uridylyl)-L-histidyl-[protein] + diphosphate. It catalyses the reaction L-seryl-[protein] + UTP = O-(5'-uridylyl)-L-seryl-[protein] + diphosphate. The enzyme catalyses L-tyrosyl-[protein] + UTP = O-(5'-uridylyl)-L-tyrosyl-[protein] + diphosphate. In terms of biological role, nucleotidyltransferase involved in the post-translational modification of proteins. It can catalyze the addition of adenosine monophosphate (AMP) or uridine monophosphate (UMP) to a protein, resulting in modifications known as AMPylation and UMPylation. The sequence is that of Protein nucleotidyltransferase YdiU from Lachnoclostridium phytofermentans (strain ATCC 700394 / DSM 18823 / ISDg) (Clostridium phytofermentans).